A 358-amino-acid polypeptide reads, in one-letter code: MSVQNVVLFDTQPLTLMLGGKLSHINVAYQTYGTLNAEKNNAVLICHALTGDAEPYFDDGRDGWWQNFMGAGLALDTDRYFFISSNVLGGCKGTTGPSSINPQTGKPYGSQFPNIVVQDIVKVQKALLDHLGISHLKAIIGGSFGGMQANQWAIDYPDFMDNIVNLCSSIYFSAEAIGFNHVMRQAVINDPNFNGGDYYEGTPPDQGLSIARMLGMLTYRTDLQLAKAFGRATKSDGSFWGDYFQVESYLSYQGKKFLERFDANSYLHLLRALDMYDPSLGYDNVKEALSRIKARYTLVSVTTDQLFKPIDLYKSKQLLEQSGVDLHFYEFPSDYGHDAFLVDYDQFEKRIRDGLAGN.

One can recognise an AB hydrolase-1 domain in the interval 41–343 (NAVLICHALT…DYGHDAFLVD (303 aa)). Ser143 acts as the Nucleophile in catalysis. A substrate-binding site is contributed by Arg212. Active-site residues include Asp304 and His337. Asp338 lines the substrate pocket.

Homodimer.

The protein resides in the cytoplasm. It catalyses the reaction L-homoserine + acetyl-CoA = O-acetyl-L-homoserine + CoA. Its pathway is amino-acid biosynthesis; L-methionine biosynthesis via de novo pathway; O-acetyl-L-homoserine from L-homoserine: step 1/1. In terms of biological role, transfers an acetyl group from acetyl-CoA to L-homoserine, forming acetyl-L-homoserine. Utilizes a ping-pong kinetic mechanism in which the acetyl group of acetyl-CoA is initially transferred to the enzyme to form an acetyl-enzyme intermediate before subsequent transfer to homoserine to form the final product, O-acetylhomoserine. This chain is Homoserine O-acetyltransferase, found in Haemophilus influenzae (strain ATCC 51907 / DSM 11121 / KW20 / Rd).